Here is a 543-residue protein sequence, read N- to C-terminus: CTP synthase (543 aa).

The segment at 1-265 (MTKFIFVTGG…DRLVTDRFRI (265 aa)) is amidoligase domain. CTP is bound at residue S13. Position 13 (S13) interacts with UTP. Residues 14–19 (SLGKGI) and D71 each bind ATP. 2 residues coordinate Mg(2+): D71 and E139. CTP contacts are provided by residues 146–148 (DIE), 186–191 (KTKPTQ), and K222. Residues 186-191 (KTKPTQ) and K222 each bind UTP. Residues 290–541 (EIAMVGKYVD…VEAASQHKQT (252 aa)) enclose the Glutamine amidotransferase type-1 domain. An L-glutamine-binding site is contributed by G351. C378 serves as the catalytic Nucleophile; for glutamine hydrolysis. L-glutamine is bound by residues 379 to 382 (LGMQ), E402, and R469. Active-site residues include H514 and E516.

The protein belongs to the CTP synthase family. In terms of assembly, homotetramer.

It catalyses the reaction UTP + L-glutamine + ATP + H2O = CTP + L-glutamate + ADP + phosphate + 2 H(+). The catalysed reaction is L-glutamine + H2O = L-glutamate + NH4(+). It carries out the reaction UTP + NH4(+) + ATP = CTP + ADP + phosphate + 2 H(+). Its pathway is pyrimidine metabolism; CTP biosynthesis via de novo pathway; CTP from UDP: step 2/2. Its activity is regulated as follows. Allosterically activated by GTP, when glutamine is the substrate; GTP has no effect on the reaction when ammonia is the substrate. The allosteric effector GTP functions by stabilizing the protein conformation that binds the tetrahedral intermediate(s) formed during glutamine hydrolysis. Inhibited by the product CTP, via allosteric rather than competitive inhibition. Functionally, catalyzes the ATP-dependent amination of UTP to CTP with either L-glutamine or ammonia as the source of nitrogen. Regulates intracellular CTP levels through interactions with the four ribonucleotide triphosphates. This is CTP synthase from Hydrogenovibrio crunogenus (strain DSM 25203 / XCL-2) (Thiomicrospira crunogena).